The chain runs to 524 residues: Inosine-5'-monophosphate dehydrogenase (524 aa).

CBS domains lie at 121–180 (FILD…NTPV) and 184–242 (MTPR…PLAS). Residues 280–282 (DSS) and 330–332 (GMG) each bind NAD(+). Residues G332 and G334 each contribute to the K(+) site. S335 provides a ligand contact to IMP. C337 serves as a coordination point for K(+). The active-site Thioimidate intermediate is the C337. IMP is bound by residues 370 to 372 (DGG), 393 to 394 (GG), and 417 to 421 (YRGMG). R439 functions as the Proton acceptor in the catalytic mechanism. Q451 contributes to the IMP binding site. E510 and G511 together coordinate K(+).

This sequence belongs to the IMPDH/GMPR family. In terms of assembly, homotetramer. K(+) serves as cofactor.

Its subcellular location is the cytoplasm. The catalysed reaction is IMP + NAD(+) + H2O = XMP + NADH + H(+). It functions in the pathway purine metabolism; XMP biosynthesis via de novo pathway; XMP from IMP: step 1/1. Mycophenolic acid (MPA) is a non-competitive inhibitor that prevents formation of the closed enzyme conformation by binding to the same site as the amobile flap. In contrast, mizoribine monophosphate (MZP) is a competitive inhibitor that induces the closed conformation. MPA is a potent inhibitor of mammalian IMPDHs but a poor inhibitor of the bacterial enzymes. MZP is a more potent inhibitor of bacterial IMPDH. Its function is as follows. Catalyzes the conversion of inosine 5'-phosphate (IMP) to xanthosine 5'-phosphate (XMP), the first committed and rate-limiting step in the de novo synthesis of guanine nucleotides, and therefore plays an important role in the regulation of cell growth. The sequence is that of Inosine-5'-monophosphate dehydrogenase (gua1) from Schizosaccharomyces pombe (strain 972 / ATCC 24843) (Fission yeast).